The sequence spans 349 residues: Small ribosomal subunit biogenesis GTPase RsgA (349 aa).

The segment at 1–38 (MSKNKLSKGQERRVQANHQRRLKRTDNKPELDDSQLGE) is disordered. A CP-type G domain is found at 102–272 (TSVLNRPDIY…VIDSPGVREF (171 aa)). Residues 158–161 (NKID) and 212–220 (GQSGVGKSS) contribute to the GTP site. Zn(2+) contacts are provided by Cys-296, Cys-301, His-303, and Cys-309.

Belongs to the TRAFAC class YlqF/YawG GTPase family. RsgA subfamily. In terms of assembly, monomer. Associates with 30S ribosomal subunit, binds 16S rRNA. It depends on Zn(2+) as a cofactor.

The protein localises to the cytoplasm. One of several proteins that assist in the late maturation steps of the functional core of the 30S ribosomal subunit. Helps release RbfA from mature subunits. May play a role in the assembly of ribosomal proteins into the subunit. Circularly permuted GTPase that catalyzes slow GTP hydrolysis, GTPase activity is stimulated by the 30S ribosomal subunit. The chain is Small ribosomal subunit biogenesis GTPase RsgA from Serratia proteamaculans (strain 568).